We begin with the raw amino-acid sequence, 643 residues long: Galactan 5-O-arabinofuranosyltransferase (643 aa).

13 helical membrane passes run 25 to 45 (VLVALGQLAAAVVVAVGVAVV), 66 to 86 (ALTTVGQVGCLAGLVGIGWLW), 97 to 117 (LGGLVLVSAFTVVTLGMPLGA), 180 to 200 (FKPWAITSMAIAVAVALVLWW), 205 to 225 (FEYALLVTVATAAVMLAYSSP), 229 to 249 (AAMITVLLPPMLVLTWSGLGA), 255 to 272 (WAAVVGAGVFLGFAATWY), 276 to 293 (VAYGAFTVVLMALLLAGS), 309 to 329 (LAVVGAIAAAIGSTTWLPYLL), 355 to 375 (FPMLQFSLLGAICLLGTLWLV), 384 to 404 (AGALAIGVLAVYLWSLLSMLA), 420 to 440 (LSVLLVAAGAFGFVEAVQALG), and 445 to 465 (GVIPMAAAIGLAGAIAFSQDI). Topologically, residues 466–643 (PDVLRPDLTI…LAIRKPQESA (178 aa)) are extracellular.

Belongs to the glycosyltransferase 85 family.

The protein localises to the cell membrane. The catalysed reaction is Adds an alpha-D-arabinofuranosyl group from trans,octacis-decaprenylphospho-beta-D-arabinofuranose at the 5-O-position of the eighth, tenth and twelfth galactofuranose unit of the galactofuranan chain of [beta-D-galactofuranosyl-(1-&gt;5)-beta-D-galactofuranosyl-(1-&gt;6)]14-beta-D-galactofuranosyl-(1-&gt;5)-beta-D-galactofuranosyl-(1-&gt;4)-alpha-L-rhamnopyranosyl-(1-&gt;3)-N-acetyl-alpha-D-glucosaminyl-diphospho-trans,octacis-decaprenol.. It participates in cell wall biogenesis; cell wall polysaccharide biosynthesis. Involved in the biosynthesis of the arabinogalactan (AG) region of the mycolylarabinogalactan-peptidoglycan (mAGP) complex, an essential component of the mycobacterial cell wall. Catalyzes the addition of the first key arabinofuranosyl (Araf) residue from the sugar donor decaprenyl-phospho-arabinose (DPA) on the C-5 of a 6-linked galactofuranosyl (Galf) of the galactan domain, thus 'priming' the galactan for further elaboration by other arabinofuranosyltransferases. It is not able to add an Araf residue to a terminal Galf. This Mycobacterium tuberculosis (strain CDC 1551 / Oshkosh) protein is Galactan 5-O-arabinofuranosyltransferase.